A 371-amino-acid polypeptide reads, in one-letter code: Probable acetylxylan esterase A (371 aa).

The first 19 residues, 1-19, serve as a signal peptide directing secretion; sequence MRALSVFVALFSFLALSSA. Residues 32 to 304 form a catalytic region; sequence GSLQQVTNFG…GEQDMEWFGF (273 aa). Ser149 acts as the Charge relay system in catalysis. N-linked (GlcNAc...) asparagine glycosylation is present at Asn191. Positions 305–335 are disordered; the sequence is TGGSSSTTTTATTPPTTSTTTSSGGSSTSTG. The segment at 305–336 is ser/Thr-rich linker; the sequence is TGGSSSTTTTATTPPTTSTTTSSGGSSTSTGV. The segment covering 307–335 has biased composition (low complexity); the sequence is GSSSTTTTATTPPTTSTTTSSGGSSTSTG. A CBM1 domain is found at 335-371; the sequence is GVAEHWGQCGGNGWTGPTACASGYTCTVINEWYSQCL.

This sequence belongs to the carbohydrate esterase 1 (CE1) family. AxeA subfamily. Monomer.

The protein resides in the secreted. The catalysed reaction is Deacetylation of xylans and xylo-oligosaccharides.. It functions in the pathway glycan degradation; xylan degradation. Its function is as follows. Acetylxylan esterase involved in the hydrolysis of xylan, a major structural heterogeneous polysaccharide found in plant biomass representing the second most abundant polysaccharide in the biosphere, after cellulose. Degrades acetylated xylans by cleaving acetyl side groups from the hetero-xylan backbone. This is Probable acetylxylan esterase A (axeA) from Aspergillus fumigatus (strain ATCC MYA-4609 / CBS 101355 / FGSC A1100 / Af293) (Neosartorya fumigata).